We begin with the raw amino-acid sequence, 129 residues long: Small ribosomal subunit protein uS11 (129 aa).

This sequence belongs to the universal ribosomal protein uS11 family. As to quaternary structure, part of the 30S ribosomal subunit. Interacts with proteins S7 and S18. Binds to IF-3.

Functionally, located on the platform of the 30S subunit, it bridges several disparate RNA helices of the 16S rRNA. Forms part of the Shine-Dalgarno cleft in the 70S ribosome. The chain is Small ribosomal subunit protein uS11 from Lactobacillus delbrueckii subsp. bulgaricus (strain ATCC 11842 / DSM 20081 / BCRC 10696 / JCM 1002 / NBRC 13953 / NCIMB 11778 / NCTC 12712 / WDCM 00102 / Lb 14).